Consider the following 119-residue polypeptide: uncharacterized protein (119 aa).

The tract at residues 1 to 22 is disordered; sequence MQGQAGKRKTDGKVPSNTEQNC.

This is an uncharacterized protein from Saccharomyces cerevisiae (strain ATCC 204508 / S288c) (Baker's yeast).